The sequence spans 394 residues: Elongation factor Tu (394 aa).

The region spanning 10 to 204 is the tr-type G domain; it reads KPHLNVGTIG…TLDTYIEDPV (195 aa). The G1 stretch occupies residues 19 to 26; sequence GHVDHGKT. A GTP-binding site is contributed by 19–26; it reads GHVDHGKT. Thr26 serves as a coordination point for Mg(2+). The segment at 60-64 is G2; that stretch reads GITIK. Positions 81–84 are G3; the sequence is DCPG. Residues 81 to 85 and 136 to 139 each bind GTP; these read DCPGH and NKCD. The tract at residues 136–139 is G4; sequence NKCD. The interval 174 to 176 is G5; sequence SAL.

This sequence belongs to the TRAFAC class translation factor GTPase superfamily. Classic translation factor GTPase family. EF-Tu/EF-1A subfamily. Monomer.

The protein localises to the cytoplasm. It carries out the reaction GTP + H2O = GDP + phosphate + H(+). Functionally, GTP hydrolase that promotes the GTP-dependent binding of aminoacyl-tRNA to the A-site of ribosomes during protein biosynthesis. The protein is Elongation factor Tu of Onion yellows phytoplasma (strain OY-M).